Here is a 379-residue protein sequence, read N- to C-terminus: Inactive 2'-5'-oligoadenylate synthase 1B (379 aa).

Residues Met-1–Gln-355 lie on the Cytoplasmic side of the membrane. Residues Asn-356–Phe-374 traverse the membrane as a helical; Anchor for type IV membrane protein segment. Residues Gly-375–Val-379 are Extracellular-facing.

The protein belongs to the 2-5A synthase family. In terms of assembly, interacts with OSBPL1A and ABCF3. In terms of tissue distribution, highly expressed in the brain, liver, spleen and heart.

The protein localises to the endoplasmic reticulum membrane. In terms of biological role, does not have 2'-5'-OAS activity, but can bind double-stranded RNA. Displays antiviral activity against viruses via an alternative antiviral pathway independent of RNase L. This Rattus norvegicus (Rat) protein is Inactive 2'-5'-oligoadenylate synthase 1B (Oas1b).